The sequence spans 307 residues: Probable RuBisCO transcriptional regulator (307 aa).

Residues 5 to 62 (FTLQQLRIFKAIASEKSFTQAAEILFVSQPSLSKQIKTLENRLGILLLNRTGNKILLT) enclose the HTH lysR-type domain. Positions 22 to 41 (FTQAAEILFVSQPSLSKQIK) form a DNA-binding region, H-T-H motif.

Belongs to the LysR transcriptional regulatory family.

It localises to the plastid. The protein resides in the chloroplast. Its function is as follows. Trans-acting transcriptional regulator of RuBisCO genes (rbcL and rbcS) expression. This Thalassiosira pseudonana (Marine diatom) protein is Probable RuBisCO transcriptional regulator (rbcR-A).